We begin with the raw amino-acid sequence, 193 residues long: Nucleoside triphosphate pyrophosphatase (193 aa).

Asp-69 (proton acceptor) is an active-site residue.

It belongs to the Maf family. The cofactor is a divalent metal cation.

Its subcellular location is the cytoplasm. It carries out the reaction a ribonucleoside 5'-triphosphate + H2O = a ribonucleoside 5'-phosphate + diphosphate + H(+). The catalysed reaction is a 2'-deoxyribonucleoside 5'-triphosphate + H2O = a 2'-deoxyribonucleoside 5'-phosphate + diphosphate + H(+). Nucleoside triphosphate pyrophosphatase. May have a dual role in cell division arrest and in preventing the incorporation of modified nucleotides into cellular nucleic acids. The sequence is that of Nucleoside triphosphate pyrophosphatase from Parasynechococcus marenigrum (strain WH8102).